A 365-amino-acid polypeptide reads, in one-letter code: Protein RecA (365 aa).

Position 73 to 80 (73 to 80 (GPESSGKT)) interacts with ATP.

This sequence belongs to the RecA family.

It localises to the cytoplasm. Can catalyze the hydrolysis of ATP in the presence of single-stranded DNA, the ATP-dependent uptake of single-stranded DNA by duplex DNA, and the ATP-dependent hybridization of homologous single-stranded DNAs. It interacts with LexA causing its activation and leading to its autocatalytic cleavage. The protein is Protein RecA of Prochlorococcus marinus (strain MIT 9312).